Here is a 343-residue protein sequence, read N- to C-terminus: LRP2-binding protein (343 aa).

The stretch at 58-91 (SQATFLLGQLHYVQGCYAEAELIFDRIKDKDPQA) is one TPR repeat. 6 Sel1-like repeats span residues 92–124 (LYQL…FWDS), 132–167 (YAAL…DNGN), 172–205 (VKAQ…GNGS), 206–241 (LESQ…ERGS), 242–273 (VYAQ…EYKD), and 293–328 (AIGM…RIDP).

Its subcellular location is the cytoplasm. Functionally, may act as an adapter that regulates LRP2 function. This chain is LRP2-binding protein (lrp2bp), found in Danio rerio (Zebrafish).